The sequence spans 486 residues: Bile acid receptor (486 aa).

Residue Lys-132 forms a Glycyl lysine isopeptide (Lys-Gly) (interchain with G-Cter in SUMO1) linkage. The nuclear receptor DNA-binding region spans 134–209 (DELCVVCGDR…MGMLAECMYT (76 aa)). The NR C4-type zinc-finger motif lies at 137–157 (CVVCGDRASGYHYNALTCEGC). Phosphoserine; by PKC/PRKCA is present on residues Ser-145 and Ser-164. Lys-167 bears the N6-acetyllysine; by EP300 mark. The NR C4-type zinc-finger motif lies at 173–197 (CKNGGNCVMDMYMRRKCQECRLRKC). The residue at position 220 (Lys-220) is an N6-methyllysine; by SETD7. Lys-227 is modified (N6-acetyllysine; by EP300). The 225-residue stretch at 262-486 (DQQTLLHFIM…PLLCEIWDVQ (225 aa)) folds into the NR LBD domain. A Glycyl lysine isopeptide (Lys-Gly) (interchain with G-Cter in SUMO1) cross-link involves residue Lys-289. Residues Arg-345, Tyr-375, and Tyr-383 each coordinate chenodeoxycholate. Residue Thr-456 is modified to Phosphothreonine; by PKC/PRKCZ. Residue His-461 coordinates chenodeoxycholate.

This sequence belongs to the nuclear hormone receptor family. NR1 subfamily. Heterodimer (via C-terminus) with RXRA (via DBD); the heterodimerization enhances the binding affinity for LXXLL motifs from coactivators. Binds DNA predominantly as a heterodimer with RXRA. After activation by agonist binding interacts with coactivators. Interacts with NCOA1, NCOA2, PPARGC1A, CARM1, SETD7, PRMT1, GPS2, SMARCA4 and MED1. Interacts with EP300 and SMARCD1. Interacts with XRCC5 and XRCC6; decreasing NR1H4/FXR transactivation activity towards ABCB11/BSEP. Interacts with PAGR1 and NCOA6; indicative for an association with an MLL2/MLL3 complex (ASCOM). Acetylated by EP300. Lys-227 as is the major acetylation site for EP300; the dynamicly regulated acetylation inhibits heterodimerization with RXRA and transactivation activity. Deacetylated by SIRT1. In terms of processing, methylation may increase transactivation of target genes. Post-translationally, phosphorylation by PKC/PRKCA increases transactivation activity by promoting association with PPARGC1A. Sumoylated upon ligand binding. Liver and hepatocyte-related cells express mainly FXRalpha1-type isoforms with isoform 3 and isoform 4 in approximately equal proportions. In intestine and kidney mainly FXRalpha2-type isoforms are expressed with isoform 1 and isoform 2 in approximately equal proportions. Expressed in pancreatic beta cells and macrophages.

The protein resides in the nucleus. Its function is as follows. Ligand-activated transcription factor. Receptor for bile acids (BAs) such as chenodeoxycholic acid (CDCA), lithocholic acid, deoxycholic acid (DCA) and allocholic acid (ACA). Plays a essential role in BA homeostasis through the regulation of genes involved in BA synthesis, conjugation and enterohepatic circulation. Also regulates lipid and glucose homeostasis and is involved innate immune response. The FXR-RXR heterodimer binds predominantly to farnesoid X receptor response elements (FXREs) containing two inverted repeats of the consensus sequence 5'-AGGTCA-3' in which the monomers are spaced by 1 nucleotide (IR-1) but also to tandem repeat DR1 sites with lower affinity, and can be activated by either FXR or RXR-specific ligands. It is proposed that monomeric nuclear receptors such as NR5A2/LRH-1 bound to coregulatory nuclear responsive element (NRE) halfsites located in close proximity to FXREs modulate transcriptional activity. In the liver activates transcription of the corepressor NR0B2 thereby indirectly inhibiting CYP7A1 and CYP8B1 (involved in BA synthesis) implicating at least in part histone demethylase KDM1A resulting in epigenomic repression, and SLC10A1/NTCP (involved in hepatic uptake of conjugated BAs). Activates transcription of the repressor MAFG (involved in regulation of BA synthesis). Activates transcription of SLC27A5/BACS and BAAT (involved in BA conjugation), ABCB11/BSEP (involved in bile salt export) by directly recruiting histone methyltransferase CARM1, and ABCC2/MRP2 (involved in secretion of conjugated BAs) and ABCB4 (involved in secretion of phosphatidylcholine in the small intestine). Activates transcription of SLC27A5/BACS and BAAT (involved in BA conjugation), ABCB11/BSEP (involved in bile salt export) by directly recruiting histone methyltransferase CARM1, and ABCC2/MRP2 (involved in secretion of conjugated BAs) and ABCB4 (involved in secretion of phosphatidylcholine in the small intestine). In the intestine activates FGF19 expression and secretion leading to hepatic CYP7A1 repression. The function also involves the coordinated induction of hepatic KLB/beta-klotho expression. Regulates transcription of liver UGT2B4 and SULT2A1 involved in BA detoxification; binding to the UGT2B4 promoter seems to imply a monomeric transactivation independent of RXRA. Modulates lipid homeostasis by activating liver NR0B2/SHP-mediated repression of SREBF1 (involved in de novo lipogenesis), expression of PLTP (involved in HDL formation), SCARB1 (involved in HDL hepatic uptake), APOE, APOC1, APOC4, PPARA (involved in beta-oxidation of fatty acids), VLDLR and SDC1 (involved in the hepatic uptake of LDL and IDL remnants), and inhibiting expression of MTTP (involved in VLDL assembly. Increases expression of APOC2 (promoting lipoprotein lipase activity implicated in triglyceride clearance). Transrepresses APOA1 involving a monomeric competition with NR2A1 for binding to a DR1 element. Also reduces triglyceride clearance by inhibiting expression of ANGPTL3 and APOC3 (both involved in inhibition of lipoprotein lipase). Involved in glucose homeostasis by modulating hepatic gluconeogenesis through activation of NR0B2/SHP-mediated repression of respective genes. Modulates glycogen synthesis (inducing phosphorylation of glycogen synthase kinase-3). Modulates glucose-stimulated insulin secretion and is involved in insulin resistance. Involved in intestinal innate immunity. Plays a role in protecting the distal small intestine against bacterial overgrowth and preservation of the epithelial barrier. Down-regulates inflammatory cytokine expression in several types of immune cells including macrophages and mononuclear cells. Mediates trans-repression of TLR4-induced cytokine expression; the function seems to require its sumoylation and prevents N-CoR nuclear receptor corepressor clearance from target genes such as IL1B and NOS2. Involved in the TLR9-mediated protective mechanism in intestinal inflammation. Plays an anti-inflammatory role in liver inflammation; proposed to inhibit pro-inflammatory (but not antiapoptotic) NF-kappa-B signaling). Promotes transcriptional activation of target genes NR0B2/SHP (inducible by unconjugated CDCA), SLC51B/OSTB (inducible by unconjugated CDCA and DCA) and FABP6/IBAP; low activity for ABCB11/BSEP (inducible by unconjugated CDCA, DCA and ACA); not inducible by taurine- and glycine-amidated CDCA. In terms of biological role, promotes transcriptional activation of target genes ABCB11/BSEP (inducible by unconjugated CDCA, DCA and ACA), NR0B2/SHP (inducible by unconjugated CDCA DCA and ACA), SLC51B/OSTB (inducible by unconjugated CDCA and DCA) and FABP6/IBAP; not inducible by taurine- and glycine-amidated CDCA. Functionally, promotes transcriptional activation of target genes NR0B2/SHP (inducible by unconjugated CDCA), SLC51B/OSTB (inducible by unconjugated CDCA and DCA) and IBAP; low activity for ABCB11/BSEP (inducible by unconjugated CDCA, DCA and ACA); not inducible by taurine- and glycine-amidated CDCA. Its function is as follows. Promotes transcriptional activation of target genes ABCB11/BSEP (inducible by unconjugated CDCA, ACA and DCA), NR0B2/SHP (inducible by unconjugated CDCA, ACA and DCA), SLC51B/OSTB (inducible by unconjugated CDCA and DCA) and FABP6/IBAP; most efficient isoform compared to isoforms 1 to 3; not inducible by taurine- and glycine-amidated CDCA. This chain is Bile acid receptor (NR1H4), found in Homo sapiens (Human).